The chain runs to 968 residues: C-1-tetrahydrofolate synthase, cytoplasmic (968 aa).

Residues 1–338 (MSAQYQRFLK…ERLAKSQWAL (338 aa)) form a methylenetetrahydrofolate dehydrogenase and cyclohydrolase region. Substrate-binding positions include 86-90 (YIRMK) and 133-135 (VQM). Residues 205–207 (GRS) and Ser-230 contribute to the NADP(+) site. Residue 305-309 (PGGVG) participates in substrate binding. The tract at residues 339-968 (QTLPLKPQRP…TETGEIEGLF (630 aa)) is formyltetrahydrofolate synthetase. 413–420 (TPLGEGKT) contacts ATP.

In the N-terminal section; belongs to the tetrahydrofolate dehydrogenase/cyclohydrolase family. It in the C-terminal section; belongs to the formate--tetrahydrofolate ligase family. Homodimer. Present in all tissues.

The protein resides in the cytoplasm. It carries out the reaction (6R)-5,10-methylene-5,6,7,8-tetrahydrofolate + NADP(+) = (6R)-5,10-methenyltetrahydrofolate + NADPH. The catalysed reaction is (6R)-5,10-methenyltetrahydrofolate + H2O = (6R)-10-formyltetrahydrofolate + H(+). It catalyses the reaction (6S)-5,6,7,8-tetrahydrofolate + formate + ATP = (6R)-10-formyltetrahydrofolate + ADP + phosphate. It participates in one-carbon metabolism; tetrahydrofolate interconversion. The chain is C-1-tetrahydrofolate synthase, cytoplasmic (pug) from Drosophila melanogaster (Fruit fly).